We begin with the raw amino-acid sequence, 52 residues long: Insulin (52 aa).

Cystine bridges form between C9/C38, C21/C51, and C37/C42.

This sequence belongs to the insulin family. Heterodimer of a B chain and an A chain linked by two disulfide bonds.

The protein resides in the secreted. Functionally, insulin decreases blood glucose concentration. It increases cell permeability to monosaccharides, amino acids and fatty acids. It accelerates glycolysis, the pentose phosphate cycle, and glycogen synthesis in liver. This Piaractus mesopotamicus (Small-scaled pacu) protein is Insulin (ins).